A 503-amino-acid polypeptide reads, in one-letter code: UDP-N-acetylglucosamine--peptide N-acetylglucosaminyltransferase GtfA subunit (503 aa).

The interval 1-78 (MTIYNINLGI…FTDIKIAPTS (78 aa)) is N-terminus R-fold-1. Position 16–19 (16–19 (GVEY)) interacts with UDP. Residues 79–195 (VTVDDVLAYF…VYHFKDKIFY (117 aa)) are extended beta-sheet domain. The C-terminus R-fold-1 stretch occupies residues 196–306 (GKQAFVRAFM…QPKIVTIPVG (111 aa)). An N-acetyl-D-glucosamine-binding site is contributed by histidine 242. The interval 307 to 503 (SIDSLTDSSQ…KKTVEEVLHD (197 aa)) is R-fold-2. Residue arginine 328 participates in UDP binding. Residue glutamate 332 participates in N-acetyl-D-glucosamine binding. UDP-binding positions include lysine 333, glycine 358, and 384–385 (HA). N-acetyl-D-glucosamine is bound at residue 404–407 (EGFG). 408-412 (LTLME) is a binding site for UDP.

Belongs to the glycosyltransferase group 1 family. Glycosyltransferase 4 subfamily. Monomer. Interacts with stabilizing protein GtfB, probably as a heterotetramer with 2 subunits each of GtfA and GtfB, part of the accessory SecA2/SecY2 protein translocation apparatus.

The protein localises to the cytoplasm. The protein resides in the cell membrane. The catalysed reaction is L-seryl-[protein] + UDP-N-acetyl-alpha-D-glucosamine = 3-O-[N-acetyl-alpha-D-glucosaminyl]-L-seryl-[protein] + UDP + H(+). The protein operates within protein modification; protein glycosylation. In terms of biological role, required for the polymorphic O-glycosylation of serine-rich repeat protein PsrP. Catalyzes the first step in glycosylation by transferring N-acetylglucosamine from UDP-GlcNAc to serine residues in PsrP. Part of the accessory SecA2/SecY2 system specifically required to export serine-rich repeat cell wall proteins encoded upstream in the same operon. The GtfA-GtfB complex adds GlcNAc from UDP-GlcNAc to PsrP (experimentally characterized with truncated PsrP-SSR1 constructs); this subunit alone has weak N-acetylglucosaminyl transferase activity that is 10-fold stimulated by GtfB. The complex requires at least a 25 residue-long peptide for activity; the in vitro assay has only been seen to glycosylate Ser residues. The alpha linkage was shown in L.reuteri. This is UDP-N-acetylglucosamine--peptide N-acetylglucosaminyltransferase GtfA subunit from Streptococcus pneumoniae serotype 4 (strain ATCC BAA-334 / TIGR4).